The sequence spans 302 residues: Pathogenicity locus probable regulatory protein HrpS (302 aa).

One can recognise a Sigma-54 factor interaction domain in the interval aspartate 9 to leucine 237. ATP-binding positions include glycine 37–aspartate 44 and alanine 99–glutamate 108. The H-T-H motif DNA-binding region spans isoleucine 279–lysine 298.

Its function is as follows. Regulates the activation of the sigma factor HrpL which itself induces the expression of hprD as well as other hrp loci which are involved in plant pathogenicity, hrmA and avr genes. Probably interacts with sigma-54. This Pseudomonas syringae pv. syringae protein is Pathogenicity locus probable regulatory protein HrpS (hrpS).